Consider the following 350-residue polypeptide: S-adenosylmethionine:tRNA ribosyltransferase-isomerase (350 aa).

The protein belongs to the QueA family. As to quaternary structure, monomer.

It localises to the cytoplasm. The enzyme catalyses 7-aminomethyl-7-carbaguanosine(34) in tRNA + S-adenosyl-L-methionine = epoxyqueuosine(34) in tRNA + adenine + L-methionine + 2 H(+). Its pathway is tRNA modification; tRNA-queuosine biosynthesis. Its function is as follows. Transfers and isomerizes the ribose moiety from AdoMet to the 7-aminomethyl group of 7-deazaguanine (preQ1-tRNA) to give epoxyqueuosine (oQ-tRNA). In Vibrio vulnificus (strain YJ016), this protein is S-adenosylmethionine:tRNA ribosyltransferase-isomerase.